The sequence spans 689 residues: Centrosomal protein of 78 kDa (689 aa).

Phosphoserine occurs at positions 325 and 327. 3 disordered regions span residues 432–451, 563–589, and 614–689; these read SSEV…VPEK, PQMT…EPKQ, and DSFP…TESH. Positions 450–505 form a coiled coil; it reads EKTSIEQEALQEKLEECLKQLKEERVIRLKVDKRVSELEHENAQLRNINFSLSEAL. 2 stretches are compositionally biased toward basic and acidic residues: residues 573-587 and 666-689; these read PKEE…KPEP and QRKE…TESH.

It belongs to the CEP78 family. Interacts with PLK4. Interacts with FAM161A. Interacts with IFT20; regulating IFT20 stability and localization. Interacts with TTC21A; regulating TTC21A stability and localization. Interacts with USP16; promoting USP16-dependent deubiquitination of tektins. Interacts with DCAF1/VPRBP; promoting localization of the EDVP complex to centrosomes. Interacts with CEP350; promoting CEP78 localization to centrosome and centriole. As to expression, widely expressed. Expressed in different retinal cell types with higher expression in cone compared to rod cells (at protein level).

The protein localises to the cytoplasm. It is found in the cytoskeleton. The protein resides in the microtubule organizing center. It localises to the centrosome. Its subcellular location is the centriole. The protein localises to the cilium basal body. In terms of biological role, centriole wall protein that localizes to mature centrioles and regulates centriole and cilia biogenesis. Involved in centrosome duplication: required for efficient PLK4 centrosomal localization and PLK4-induced overduplication of centrioles. Involved in cilium biogenesis and controls cilium length. Acts as a regulator of protein stability by preventing ubiquitination of centrosomal proteins, such as CCP110 and tektins. Associates with the EDVP complex, preventing ubiquitination and degradation of CCP110. Promotes deubiquitination of tektin proteins (TEKT1, TEKT2, TEK3, TEKT4 and TEKT5) via its interaction with USP16. The polypeptide is Centrosomal protein of 78 kDa (Homo sapiens (Human)).